The chain runs to 146 residues: Transcriptional regulator MraZ (146 aa).

SpoVT-AbrB domains lie at 9-55 and 81-124; these read ASAL…PRPA and AMDV…DVQR.

The protein belongs to the MraZ family. As to quaternary structure, forms oligomers.

It localises to the cytoplasm. The protein resides in the nucleoid. This is Transcriptional regulator MraZ from Methylibium petroleiphilum (strain ATCC BAA-1232 / LMG 22953 / PM1).